We begin with the raw amino-acid sequence, 295 residues long: Large ribosomal subunit protein uL29m (295 aa).

Belongs to the universal ribosomal protein uL29 family. As to quaternary structure, component of the mitochondrial large ribosomal subunit. Mature mitochondrial ribosomes consist of a small (37S) and a large (54S) subunit. The 37S subunit contains at least 33 different proteins and 1 molecule of RNA (15S). The 54S subunit contains at least 45 different proteins and 1 molecule of RNA (21S).

Its subcellular location is the mitochondrion. This is Large ribosomal subunit protein uL29m (MRPL4) from Meyerozyma guilliermondii (strain ATCC 6260 / CBS 566 / DSM 6381 / JCM 1539 / NBRC 10279 / NRRL Y-324) (Yeast).